Here is a 997-residue protein sequence, read N- to C-terminus: Protein Smaug (997 aa).

Residues 1 to 37 (MKYATGTDNAMTSGISGQTNNSNSASTEMQPTTSTPT) are compositionally biased toward polar residues. Disordered stretches follow at residues 1–69 (MKYA…QSQP) and 329–370 (LCPA…GSSS). 2 stretches are compositionally biased toward low complexity: residues 44-69 (TPTA…QSQP) and 329-338 (LCPASGSRSS). Residues S564 and S575 each carry the phosphoserine modification. An interaction with cup region spans residues 583–763 (EFKPNYIKFH…KDLKFKLSKM (181 aa)). One can recognise an SAM domain in the interval 600-654 (GIGLWLKSLRLHKYIELFKNMTYEEMLLITEDFLQSVGVTKGASHKLALCIEKLK). 2 disordered regions span residues 773–892 (HVKP…MQQM) and 944–972 (GSSD…TSAE). 2 stretches are compositionally biased toward polar residues: residues 802 to 822 (NGSN…NFSL) and 854 to 864 (HQPQYKSSSYP). The residue at position 970 (S970) is a Phosphoserine.

This sequence belongs to the SMAUG family. As to quaternary structure, interacts with oskar (osk). Binds to the 3'-UTR of nos. Interacts with cup, which in turn recruits eIF4-E, leading to an indirect interaction between smg and eIF4-E that prevents mRNA translation.

The protein resides in the cytoplasm. Its function is as follows. Translation regulator that binds to the 3'-UTR of specific mRNAs such as nanos (nos) and prevent their translation. Prevents translation of unlocalized nos in the bulk cytoplasm via the recruitment of cup. The polypeptide is Protein Smaug (Drosophila erecta (Fruit fly)).